The sequence spans 507 residues: Cobyric acid synthase (507 aa).

In terms of domain architecture, GATase cobBQ-type spans 273-468; the sequence is RPVIAVIAYP…LHGMFEDPAV (196 aa). Catalysis depends on Cys-354, which acts as the Nucleophile. The active site involves His-460.

It belongs to the CobB/CobQ family. CobQ subfamily.

The protein operates within cofactor biosynthesis; adenosylcobalamin biosynthesis. Catalyzes amidations at positions B, D, E, and G on adenosylcobyrinic A,C-diamide. NH(2) groups are provided by glutamine, and one molecule of ATP is hydrogenolyzed for each amidation. The chain is Cobyric acid synthase from Polaromonas sp. (strain JS666 / ATCC BAA-500).